The sequence spans 251 residues: Aliphatic sulfonates import ATP-binding protein SsuB (251 aa).

One can recognise an ABC transporter domain in the interval 3–231 (VSINEVSKYF…PRNKTSQSFQ (229 aa)). 39 to 46 (GPSGCGKS) contacts ATP.

This sequence belongs to the ABC transporter superfamily. Aliphatic sulfonates importer (TC 3.A.1.17.2) family. As to quaternary structure, the complex is composed of two ATP-binding proteins (SsuB), two transmembrane proteins (SsuC) and a solute-binding protein (SsuA).

It is found in the cell membrane. The enzyme catalyses ATP + H2O + aliphatic sulfonate-[sulfonate-binding protein]Side 1 = ADP + phosphate + aliphatic sulfonateSide 2 + [sulfonate-binding protein]Side 1.. In terms of biological role, part of the ABC transporter complex SsuABC involved in aliphatic sulfonates import. Responsible for energy coupling to the transport system. The polypeptide is Aliphatic sulfonates import ATP-binding protein SsuB (Bacillus anthracis).